The chain runs to 124 residues: Large ribosomal subunit protein bL12 (124 aa).

This sequence belongs to the bacterial ribosomal protein bL12 family. In terms of assembly, homodimer. Part of the ribosomal stalk of the 50S ribosomal subunit. Forms a multimeric L10(L12)X complex, where L10 forms an elongated spine to which 2 to 4 L12 dimers bind in a sequential fashion. Binds GTP-bound translation factors.

Forms part of the ribosomal stalk which helps the ribosome interact with GTP-bound translation factors. Is thus essential for accurate translation. In Burkholderia lata (strain ATCC 17760 / DSM 23089 / LMG 22485 / NCIMB 9086 / R18194 / 383), this protein is Large ribosomal subunit protein bL12.